The chain runs to 251 residues: Hydroxyacylglutathione hydrolase (251 aa).

Positions 53, 55, 57, 58, 110, 127, and 165 each coordinate Zn(2+).

It belongs to the metallo-beta-lactamase superfamily. Glyoxalase II family. As to quaternary structure, monomer. Zn(2+) serves as cofactor.

It catalyses the reaction an S-(2-hydroxyacyl)glutathione + H2O = a 2-hydroxy carboxylate + glutathione + H(+). It functions in the pathway secondary metabolite metabolism; methylglyoxal degradation; (R)-lactate from methylglyoxal: step 2/2. Thiolesterase that catalyzes the hydrolysis of S-D-lactoyl-glutathione to form glutathione and D-lactic acid. The chain is Hydroxyacylglutathione hydrolase from Salmonella dublin (strain CT_02021853).